We begin with the raw amino-acid sequence, 173 residues long: Putative pre-16S rRNA nuclease (173 aa).

The protein belongs to the YqgF nuclease family.

It is found in the cytoplasm. Its function is as follows. Could be a nuclease involved in processing of the 5'-end of pre-16S rRNA. This is Putative pre-16S rRNA nuclease from Rhodopirellula baltica (strain DSM 10527 / NCIMB 13988 / SH1).